A 294-amino-acid chain; its full sequence is Cytidine deaminase (294 aa).

2 consecutive CMP/dCMP-type deaminase domains span residues 48-168 (DEDA…FGPK) and 186-294 (LTGD…VLLG). 89–91 (NME) is a substrate binding site. Histidine 102 provides a ligand contact to Zn(2+). Catalysis depends on glutamate 104, which acts as the Proton donor. Residues cysteine 129 and cysteine 132 each coordinate Zn(2+).

The protein belongs to the cytidine and deoxycytidylate deaminase family. Homodimer. Zn(2+) is required as a cofactor.

The catalysed reaction is cytidine + H2O + H(+) = uridine + NH4(+). The enzyme catalyses 2'-deoxycytidine + H2O + H(+) = 2'-deoxyuridine + NH4(+). Functionally, this enzyme scavenges exogenous and endogenous cytidine and 2'-deoxycytidine for UMP synthesis. In Salmonella enteritidis PT4 (strain P125109), this protein is Cytidine deaminase.